Consider the following 345-residue polypeptide: tRNA-specific 2-thiouridylase MnmA (345 aa).

Residues Ala6–Ser13 and Leu32 each bind ATP. Cys100 (nucleophile) is an active-site residue. The cysteines at positions 100 and 197 are disulfide-linked. Gly124 provides a ligand contact to ATP. Residues Arg146–Gln148 are interaction with tRNA. Cys197 acts as the Cysteine persulfide intermediate in catalysis.

This sequence belongs to the MnmA/TRMU family.

The protein resides in the cytoplasm. The catalysed reaction is S-sulfanyl-L-cysteinyl-[protein] + uridine(34) in tRNA + AH2 + ATP = 2-thiouridine(34) in tRNA + L-cysteinyl-[protein] + A + AMP + diphosphate + H(+). Catalyzes the 2-thiolation of uridine at the wobble position (U34) of tRNA, leading to the formation of s(2)U34. In Acidiphilium cryptum (strain JF-5), this protein is tRNA-specific 2-thiouridylase MnmA.